The following is a 130-amino-acid chain: Small ribosomal subunit protein uS8 (130 aa).

It belongs to the universal ribosomal protein uS8 family. As to quaternary structure, part of the 30S ribosomal subunit.

In terms of biological role, one of the primary rRNA binding proteins, it binds directly to 16S rRNA central domain where it helps coordinate assembly of the platform of the 30S subunit. This is Small ribosomal subunit protein uS8 from Methanosarcina barkeri (strain Fusaro / DSM 804).